The chain runs to 239 residues: 1-(5-phosphoribosyl)-5-[(5-phosphoribosylamino)methylideneamino] imidazole-4-carboxamide isomerase (239 aa).

The active-site Proton acceptor is aspartate 8. Residue aspartate 130 is the Proton donor of the active site.

Belongs to the HisA/HisF family.

The protein resides in the cytoplasm. The enzyme catalyses 1-(5-phospho-beta-D-ribosyl)-5-[(5-phospho-beta-D-ribosylamino)methylideneamino]imidazole-4-carboxamide = 5-[(5-phospho-1-deoxy-D-ribulos-1-ylimino)methylamino]-1-(5-phospho-beta-D-ribosyl)imidazole-4-carboxamide. It participates in amino-acid biosynthesis; L-histidine biosynthesis; L-histidine from 5-phospho-alpha-D-ribose 1-diphosphate: step 4/9. This chain is 1-(5-phosphoribosyl)-5-[(5-phosphoribosylamino)methylideneamino] imidazole-4-carboxamide isomerase, found in Streptococcus thermophilus (strain ATCC BAA-491 / LMD-9).